We begin with the raw amino-acid sequence, 1891 residues long: TATA-binding protein-associated factor mot1 (1891 aa).

Residues 30 to 68 (PDELFNLLGRILPYLRSKSWDTRAAAAKAIGLIVANADT) form an HEAT 1 repeat. Disordered regions lie at residues 184-216 (FVAS…LSKR), 241-283 (LSSR…LDRS), and 295-316 (FKGA…EGPN). The segment covering 264-275 (ENGEERNGDSKP) has biased composition (basic and acidic residues). HEAT repeat units lie at residues 473-511 (SKLM…EFVK) and 569-606 (SSFG…LEGE). The span at 699 to 710 (SAAAPARSSPAS) shows a compositional bias: low complexity. Residues 699 to 740 (SAAAPARSSPASNTPEGTKGRRRKSEKKEAPPPSAHNVDGHM) form a disordered region. 4 HEAT repeats span residues 957-996 (PKKP…YYTT), 1139-1177 (YPWV…VITV), 1181-1216 (TMLV…VMED), and 1219-1257 (LPYV…LVPL). One can recognise a Helicase ATP-binding domain in the interval 1316–1489 (AFLNRYNLHG…WSLFDFLMPG (174 aa)). ATP is bound at residue 1329 to 1336 (DDMGLGKT). A DEAH box motif is present at residues 1440–1443 (DEGH). The stretch at 1526–1565 (EALHKQVLPFLLRRLKEEVLNDLPPKIIQNYYCDPSELQR) is one HEAT 8 repeat. The Helicase C-terminal domain occupies 1663-1813 (DLSGASYVSP…STVVNQQNAG (151 aa)).

This sequence belongs to the SNF2/RAD54 helicase family. Forms the NCT transcriptional regulatory complex with nctA and nctB.

It is found in the nucleus. In terms of biological role, regulates transcription in association with TATA binding protein (TBP). Removes TBP from the TATA box via its C-terminal ATPase activity. Both transcription activation and repression require its ATPase activity. Part of the NCT transcriptional regulatory complex that acts as a key regulator of ergosterol biosynthesis and the azole exporter cdr1B. The NCT complex binds the promoters of genes linked to azole susceptibility, and especially represses the expression of cdr1B transporter. The polypeptide is TATA-binding protein-associated factor mot1 (Aspergillus fumigatus (strain CBS 144.89 / FGSC A1163 / CEA10) (Neosartorya fumigata)).